The primary structure comprises 358 residues: 3-isopropylmalate dehydrogenase (358 aa).

G75 to E88 contacts NAD(+). 4 residues coordinate substrate: R96, R106, R135, and D225. 3 residues coordinate Mg(2+): D225, D249, and D253. NAD(+) is bound at residue G283 to N295.

This sequence belongs to the isocitrate and isopropylmalate dehydrogenases family. LeuB type 1 subfamily. In terms of assembly, homodimer. It depends on Mg(2+) as a cofactor. Mn(2+) is required as a cofactor.

It is found in the cytoplasm. The catalysed reaction is (2R,3S)-3-isopropylmalate + NAD(+) = 4-methyl-2-oxopentanoate + CO2 + NADH. The protein operates within amino-acid biosynthesis; L-leucine biosynthesis; L-leucine from 3-methyl-2-oxobutanoate: step 3/4. Its function is as follows. Catalyzes the oxidation of 3-carboxy-2-hydroxy-4-methylpentanoate (3-isopropylmalate) to 3-carboxy-4-methyl-2-oxopentanoate. The product decarboxylates to 4-methyl-2 oxopentanoate. The chain is 3-isopropylmalate dehydrogenase from Leptospira interrogans serogroup Icterohaemorrhagiae serovar copenhageni (strain Fiocruz L1-130).